Reading from the N-terminus, the 505-residue chain is Histidine ammonia-lyase (505 aa).

The 5-imidazolinone (Ala-Gly) cross-link spans 141–143 (ASG). Ser142 is modified (2,3-didehydroalanine (Ser)).

It belongs to the PAL/histidase family. Contains an active site 4-methylidene-imidazol-5-one (MIO), which is formed autocatalytically by cyclization and dehydration of residues Ala-Ser-Gly.

It is found in the cytoplasm. The enzyme catalyses L-histidine = trans-urocanate + NH4(+). It functions in the pathway amino-acid degradation; L-histidine degradation into L-glutamate; N-formimidoyl-L-glutamate from L-histidine: step 1/3. This Bacillus cereus (strain 03BB102) protein is Histidine ammonia-lyase.